The sequence spans 130 residues: Phosphoribosyl-AMP cyclohydrolase (130 aa).

Asp77 is a binding site for Mg(2+). Cys78 contributes to the Zn(2+) binding site. Residues Asp79 and Asp81 each contribute to the Mg(2+) site. Zn(2+)-binding residues include Cys95 and Cys102.

The protein belongs to the PRA-CH family. Homodimer. It depends on Mg(2+) as a cofactor. Zn(2+) serves as cofactor.

Its subcellular location is the cytoplasm. The enzyme catalyses 1-(5-phospho-beta-D-ribosyl)-5'-AMP + H2O = 1-(5-phospho-beta-D-ribosyl)-5-[(5-phospho-beta-D-ribosylamino)methylideneamino]imidazole-4-carboxamide. The protein operates within amino-acid biosynthesis; L-histidine biosynthesis; L-histidine from 5-phospho-alpha-D-ribose 1-diphosphate: step 3/9. Functionally, catalyzes the hydrolysis of the adenine ring of phosphoribosyl-AMP. The protein is Phosphoribosyl-AMP cyclohydrolase of Pseudomonas entomophila (strain L48).